A 333-amino-acid polypeptide reads, in one-letter code: Taste receptor type 2 member 38 (333 aa).

Residues 1-17 (MLTLTRIHTVSYEVRST) lie on the Extracellular side of the membrane. Residues 18-38 (FLFISVLEFAVGFLTNAFVFL) form a helical membrane-spanning segment. Over 39–55 (VNFWDVVKRQPLSNSDC) the chain is Cytoplasmic. The chain crosses the membrane as a helical span at residues 56 to 76 (VLLCLSISRLFLHGLLFLSAI). Residues 77–94 (QLTHFQKLSEPLNHSYQA) lie on the Extracellular side of the membrane. The helical transmembrane segment at 95 to 115 (INMLWMIANQANLWLAACLSL) threads the bilayer. Topologically, residues 116–142 (LYCSKLIRFSHTFLICLASWVSRKISQ) are cytoplasmic. The chain crosses the membrane as a helical span at residues 143 to 163 (MLLGIILCSCICTVLCVWCFF). The Extracellular portion of the chain corresponds to 164–190 (SRPHFTVTTVLFMNNNTRLNWQIKDLN). N-linked (GlcNAc...) asparagine glycosylation occurs at Asn-178. The helical transmembrane segment at 191-211 (LFYSFLFCYLWSVPPFLLFLV) threads the bilayer. Topologically, residues 212 to 251 (SSGMLTVSLGRHMRTMKVYTRDSRDPSLEAHIKALKSLVS) are cytoplasmic. A helical membrane pass occupies residues 252-272 (FFCFFVISSCAAFISVPLLIL). Residues 273–276 (WRDK) lie on the Extracellular side of the membrane. The helical transmembrane segment at 277 to 297 (IGVMVCVGIMAACPSGHAAVL) threads the bilayer. Residues 298–333 (ISGNAKLRRAVTTILLWAQSSLKVRADHKADSRTLC) lie on the Cytoplasmic side of the membrane.

It belongs to the G-protein coupled receptor T2R family.

It localises to the membrane. Its function is as follows. Receptor that may play a role in the perception of bitterness and is gustducin-linked. May play a role in sensing the chemical composition of the gastrointestinal content. The activity of this receptor may stimulate alpha gustducin, mediate PLC-beta-2 activation and lead to the gating of TRPM5. This Pan paniscus (Pygmy chimpanzee) protein is Taste receptor type 2 member 38 (TAS2R38).